The chain runs to 78 residues: Defensin-like protein 141 (78 aa).

Residues M1 to G24 form the signal peptide. 4 cysteine pairs are disulfide-bonded: C31/C76, C40/C59, C45/C70, and C49/C72.

The protein belongs to the DEFL family.

Its subcellular location is the secreted. This Arabidopsis thaliana (Mouse-ear cress) protein is Defensin-like protein 141 (LCR3).